Reading from the N-terminus, the 815-residue chain is MGNSPSTQDPSHSTKKEHGHHFHDAFNKDRQGSITSQLFNNRKSTHKRRASHTSEHNGAIPPRMQLLASHDPSTDCDGRMSSDTTIDKGPSHLFKKDYSLSSAADVNDTTLANLTLSDDHDVGAPEEQVKSPSFLSPGPSMATVKQTKSDLDDLSTLNYTMVDETTENERNDKPHHERHRSSIIALKKNLLESSATASPSPTRSSSVHSASLPALTKTDSIDIPVRQPYSKKPSIHAYQYQYLNNDETFSENSQMDKEGNSDSVDAEAGVLQSEDMVLNQSLLQNALKKDMQRLSRVNSSNSMYTTERISHANNNGNIENNTRNKGNAGGSNDDFTAPISATAKMMMKLYGDKTLMERDLNKHQNKTKKAQNKKIRSASNSRRSSFASLHSLQSRKSILTNGLNLQPLHPLHPIINDNESQYSAPQHREISHHSNSMSSMSSISSTNSTENTLVVLKWKDDGTVAATTEVFIVSTDIASALKEQRELTLDENASLDSEKQLNPRIRMVYDDVHKEWFVPDLFLPAGIYRLQFSINGILTHSNFLPTATDSEGNFVNWFEVLPGYHTIEPFRNEADMDSQVEPTLDEELPKRPELKRFPSSSRKSSYYSAKGVERPSTPFSDYRGLSRSSSINMRDSFVRLKASSLDLMAEVKPERLVYSNEIPNLFNIGDGSTISVKGDSDDVHPQEPPSFTHRVVDCNQDDLFATLQQGGNIDAETAEAVFLSRYPVPDLPIYLNSSYLNRILNQSNQNSESHERDEGAINHIIPHVNLNHLLTSSIRDEIISVACTTRYEGKFITQVVYAPCYYKTQKSQISN.

Residues 1–11 (MGNSPSTQDPS) are compositionally biased toward polar residues. Disordered stretches follow at residues 1–88 (MGNS…TIDK) and 117–148 (SDDH…KQTK). G2 is lipidated: N-myristoyl glycine. The segment covering 12-31 (HSTKKEHGHHFHDAFNKDRQ) has biased composition (basic and acidic residues). A compositionally biased stretch (polar residues) spans 32 to 42 (GSITSQLFNNR). S33 is subject to Phosphoserine. Composition is skewed to basic and acidic residues over residues 72-88 (PSTD…TIDK) and 117-129 (SDDH…EEQV). 6 positions are modified to phosphoserine: S181, S198, S200, S206, S209, and S220. Disordered stretches follow at residues 310 to 335 (SHAN…NDDF), 363 to 389 (HQNK…FASL), and 410 to 444 (PLHP…SSIS). Residues 313-326 (NNNGNIENNTRNKG) are compositionally biased toward low complexity. S331 carries the phosphoserine modification. The segment covering 363–376 (HQNKTKKAQNKKIR) has biased composition (basic residues). 2 stretches are compositionally biased toward low complexity: residues 377–389 (SASN…FASL) and 433–444 (HSNSMSSMSSIS). Residues 473–716 (VSTDIASALK…LQQGGNIDAE (244 aa)) are kinase-interacting sequence (KIS); required for interaction with SNF1. Residues S494 and S497 each carry the phosphoserine modification. The segment at 583-616 (TLDEELPKRPELKRFPSSSRKSSYYSAKGVERPS) is disordered. Residues 587–596 (ELPKRPELKR) are compositionally biased toward basic and acidic residues. A compositionally biased stretch (low complexity) spans 599–608 (SSSRKSSYYS). S643 is modified (phosphoserine). The segment at 724–804 (SRYPVPDLPI…FITQVVYAPC (81 aa)) is association with SNF1 kinase complex (ASC) domain; required for interaction with SNF4.

It belongs to the 5'-AMP-activated protein kinase beta subunit family. As to quaternary structure, component of the SNF1 kinase complex, a heterotrimeric complex composed of the catalytic alpha subunit SNF1, one of the three related beta subunits SIP1, SIP2 or GAL83, and the regulatory gamma subunit SNF4. The beta subunit serves as a bridge between the catalytic and the regulatory subunit. Interacts (via KIS domain) with SNF1. Interacts (via ASC domain) with SNF4. Phosphorylated by SNF1 in vitro.

Its subcellular location is the cytoplasm. It is found in the vacuole membrane. Functionally, beta subunit of the SNF1 kinase complex, which is required for transcriptional, metabolic, and developmental adaptations in response to glucose limitation. Has a structural role, mediating heterotrimer formation, and a regulatory role, defining carbon source-regulated subcellular location and substrate specificity of the SNF1 kinase complex. Promotes the PKA-regulated relocalization of the SNF1 kinase complex to the vacuolar membrane in response to various types of carbon stress. The protein is SNF1 protein kinase subunit beta-1 (SIP1) of Saccharomyces cerevisiae (strain YJM789) (Baker's yeast).